The chain runs to 335 residues: Protein-lysine N-methyltransferase EEF2KMT (335 aa).

The residue at position 1 (M1) is an N-acetylmethionine. S-adenosyl-L-methionine is bound by residues W139, G165–G167, W228, and A247.

Belongs to the class I-like SAM-binding methyltransferase superfamily. EEF2KMT family. As to quaternary structure, interacts with FAM86B2 and FAM86C1P.

The protein localises to the cytoplasm. It carries out the reaction L-lysyl-[protein] + 3 S-adenosyl-L-methionine = N(6),N(6),N(6)-trimethyl-L-lysyl-[protein] + 3 S-adenosyl-L-homocysteine + 3 H(+). Functionally, catalyzes the trimethylation of eukaryotic elongation factor 2 (EEF2) on 'Lys-525'. This Mus musculus (Mouse) protein is Protein-lysine N-methyltransferase EEF2KMT (Eef2kmt).